Consider the following 157-residue polypeptide: Crossover junction endodeoxyribonuclease RuvC (157 aa).

Catalysis depends on residues D7, E66, and D139. Mg(2+)-binding residues include D7, E66, and D139.

Belongs to the RuvC family. In terms of assembly, homodimer which binds Holliday junction (HJ) DNA. The HJ becomes 2-fold symmetrical on binding to RuvC with unstacked arms; it has a different conformation from HJ DNA in complex with RuvA. In the full resolvosome a probable DNA-RuvA(4)-RuvB(12)-RuvC(2) complex forms which resolves the HJ. It depends on Mg(2+) as a cofactor.

The protein localises to the cytoplasm. The catalysed reaction is Endonucleolytic cleavage at a junction such as a reciprocal single-stranded crossover between two homologous DNA duplexes (Holliday junction).. In terms of biological role, the RuvA-RuvB-RuvC complex processes Holliday junction (HJ) DNA during genetic recombination and DNA repair. Endonuclease that resolves HJ intermediates. Cleaves cruciform DNA by making single-stranded nicks across the HJ at symmetrical positions within the homologous arms, yielding a 5'-phosphate and a 3'-hydroxyl group; requires a central core of homology in the junction. The consensus cleavage sequence is 5'-(A/T)TT(C/G)-3'. Cleavage occurs on the 3'-side of the TT dinucleotide at the point of strand exchange. HJ branch migration catalyzed by RuvA-RuvB allows RuvC to scan DNA until it finds its consensus sequence, where it cleaves and resolves the cruciform DNA. The sequence is that of Crossover junction endodeoxyribonuclease RuvC from Campylobacter concisus (strain 13826).